The chain runs to 232 residues: MSVVTMKQLLEAGVHFGHQTRRWNPKMKRYIFTERNGIYIVDLQKTVKKLDEAYEFVKELAANGEKIMFVGTKKQAQDAVKNEAERCEMFYVNQRWLGGMLTNFQTISKRLNRFYELEQMEEDGTFEVLPKKEVQSLRREHAKLDKFLGGLRGMEDLPGALFVIDPKKEKIAVAEARKLGIPIVSIVDTNCDPDEVDYVIPGNDDAIRAVKLITEKIADSVLEGKQGVQLAE.

It belongs to the universal ribosomal protein uS2 family.

This Natranaerobius thermophilus (strain ATCC BAA-1301 / DSM 18059 / JW/NM-WN-LF) protein is Small ribosomal subunit protein uS2.